We begin with the raw amino-acid sequence, 58 residues long: AVQKVDGEPRAHLGALLARYIQQARKAPSGRMSVIKNLQNLDPSHRISDRDYMGWMDF.

Sulfotyrosine is present on Tyr52. The residue at position 58 (Phe58) is a Phenylalanine amide.

It belongs to the gastrin/cholecystokinin family. Binds to CCK-A receptors in the pancreas and CCK-B receptors in the brain. cholecystokinin 8 binds CCK-A receptors more potently than cholecystokinin 58, cholecystokinin 8 and cholecystokinin 58 bind CCK-B receptors with equal affinity. In terms of processing, the precursor is cleaved by proteases to produce a number of active cholecystokinins. Post-translationally, cholecystokinin 58 occurs in both sulfated (CCK58(s)) and nonsulfated (CCK58(ns)) forms, which differ in their receptor-binding activities. CCK58(s) binds to the CCK-A receptor with high affinity, CCK58(ns) binds poorly to the CCK-A receptor. CCK58(s) and CCK58(ns) both bind the CCK-B receptor. The precursor is cleaved by ACE, which removes the Gly-Arg-Arg peptide at the C-terminus, leading to mature hormone.

The protein localises to the secreted. This peptide hormone induces gall bladder contraction and the release of pancreatic enzymes in the gut. Its function in the brain is not clear. Binding to CCK-A receptors stimulates amylase release from the pancreas, binding to CCK-B receptors stimulates gastric acid secretion. cholecystokinin 58 and cholecystokinin 8, but not cholecystokinin 58 desnonopeptide, stimulate amylase release from the pancreas. cholecystokinin 58, but not cholecystokinin 8, increases bile-pancreatic volume. In Canis lupus familiaris (Dog), this protein is Cholecystokinins.